The primary structure comprises 130 residues: MGEILLLAAGGALGAVSRYGLNNLTVKLLGDSFPYGTLIVNCLGCFVLGFLMQWGFSSDSHNTHLKLMLTAGFLGAFTTFSTFSYETLDCFKNGDYFNGFSNILANVLLGLLMVFIGAYLGSLLKQNSGT.

The next 4 membrane-spanning stretches (helical) occupy residues 1–21, 36–56, 65–85, and 103–123; these read MGEI…RYGL, GTLI…QWGF, LKLM…TFSY, and ILAN…LGSL. G75 and T78 together coordinate Na(+).

Belongs to the fluoride channel Fluc/FEX (TC 1.A.43) family.

It is found in the cell membrane. It carries out the reaction fluoride(in) = fluoride(out). With respect to regulation, na(+) is not transported, but it plays an essential structural role and its presence is essential for fluoride channel function. Its function is as follows. Fluoride-specific ion channel. Important for reducing fluoride concentration in the cell, thus reducing its toxicity. The protein is Fluoride-specific ion channel FluC of Dehalococcoides mccartyi (strain ATCC BAA-2266 / KCTC 15142 / 195) (Dehalococcoides ethenogenes (strain 195)).